Consider the following 627-residue polypeptide: Lipid-A-disaccharide synthase (627 aa).

A unknown region spans residues 1-224 (MFPLYLVRLL…IYKKSRLSEF (224 aa)). Residues 225–627 (HNPSYFISAG…YVQKNVRPSF (403 aa)) are lipid-A-disaccharide synthase.

The protein in the C-terminal section; belongs to the LpxB family.

It carries out the reaction a lipid X + a UDP-2-N,3-O-bis[(3R)-3-hydroxyacyl]-alpha-D-glucosamine = a lipid A disaccharide + UDP + H(+). Its pathway is bacterial outer membrane biogenesis; LPS lipid A biosynthesis. Condensation of UDP-2,3-diacylglucosamine and 2,3-diacylglucosamine-1-phosphate to form lipid A disaccharide, a precursor of lipid A, a phosphorylated glycolipid that anchors the lipopolysaccharide to the outer membrane of the cell. The chain is Lipid-A-disaccharide synthase (lpxB) from Chlamydia abortus (strain DSM 27085 / S26/3) (Chlamydophila abortus).